We begin with the raw amino-acid sequence, 98 residues long: Co-chaperonin GroES (98 aa).

It belongs to the GroES chaperonin family. Heptamer of 7 subunits arranged in a ring. Interacts with the chaperonin GroEL.

Its subcellular location is the cytoplasm. Together with the chaperonin GroEL, plays an essential role in assisting protein folding. The GroEL-GroES system forms a nano-cage that allows encapsulation of the non-native substrate proteins and provides a physical environment optimized to promote and accelerate protein folding. GroES binds to the apical surface of the GroEL ring, thereby capping the opening of the GroEL channel. This chain is Co-chaperonin GroES, found in Agrobacterium fabrum (strain C58 / ATCC 33970) (Agrobacterium tumefaciens (strain C58)).